The chain runs to 942 residues: Netrin receptor UNC5B-b (942 aa).

The signal sequence occupies residues M1–A30. At G31 to Y380 the chain is on the extracellular side. Residues P51–Y148 enclose the Ig-like domain. Cystine bridges form between C72–C133, C84–C131, C177–C228, C261–C298, C265–C302, C276–C288, C317–C351, C321–C356, and C329–C341. Residues R150–I245 form the Ig-like C2-type domain. N225 is a glycosylation site (N-linked (GlcNAc...) asparagine). TSP type-1 domains are found at residues N249–P303 and D305–M357. N350 carries N-linked (GlcNAc...) asparagine glycosylation. A helical transmembrane segment spans residues A381–V401. Over Y402 to C942 the chain is Cytoplasmic. Positions N541–S684 constitute a ZU5 domain. The interval R687 to P835 is UPA domain. A Death domain is found at I863–G940.

It belongs to the unc-5 family. In terms of assembly, interacts (via extracellular domain) with flrt3 (via extracellular domain). Interacts with rnd1.

Its subcellular location is the cell membrane. Its function is as follows. Plays a role in cell-cell adhesion during embryonic development. Receptor for netrin required for axon guidance. Mediates axon repulsion of neuronal growth cones in the developing nervous system upon ligand binding. The polypeptide is Netrin receptor UNC5B-b (Xenopus laevis (African clawed frog)).